The following is a 431-amino-acid chain: Ribosome assembly protein SQT1 (431 aa).

WD repeat units follow at residues 63–102, 107–146, 149–192, 199–243, 309–348, and 350–387; these read KHTD…PKFA, GYGE…AQWK, SQMQ…GSLE, VHQQ…QLFK, ELDA…VRHK, and VLED…EKFV.

Interacts strongly with QSR1. Part of an oligomeric protein complex that is loosely associated with ribosomes.

Functionally, may be involved in the late step of 60S ribosomal subunit assembly or modification in the cytoplasm. The chain is Ribosome assembly protein SQT1 (SQT1) from Saccharomyces cerevisiae (strain ATCC 204508 / S288c) (Baker's yeast).